The chain runs to 566 residues: Transcription factor opdL (566 aa).

The segment at residues 15 to 45 (CATCARAKCRCVPRNGGRGRCERCHHLNKEC) is a DNA-binding region (zn(2)-C6 fungal-type).

The protein resides in the nucleus. Functionally, transcription factor; part of the gene cluster that mediates the biosynthesis of oxopyrrolidines, polyketide-amino acid hybrid compounds with feature structures of tetramic acid. This chain is Transcription factor opdL, found in Penicillium oxalicum (strain 114-2 / CGMCC 5302) (Penicillium decumbens).